The following is a 158-amino-acid chain: NADH-quinone oxidoreductase subunit B (158 aa).

The [4Fe-4S] cluster site is built by C37, C38, C102, and C132.

The protein belongs to the complex I 20 kDa subunit family. As to quaternary structure, NDH-1 is composed of 14 different subunits. Subunits NuoB, C, D, E, F, and G constitute the peripheral sector of the complex. Requires [4Fe-4S] cluster as cofactor.

Its subcellular location is the cell inner membrane. It carries out the reaction a quinone + NADH + 5 H(+)(in) = a quinol + NAD(+) + 4 H(+)(out). Its function is as follows. NDH-1 shuttles electrons from NADH, via FMN and iron-sulfur (Fe-S) centers, to quinones in the respiratory chain. Couples the redox reaction to proton translocation (for every two electrons transferred, four hydrogen ions are translocated across the cytoplasmic membrane), and thus conserves the redox energy in a proton gradient. The sequence is that of NADH-quinone oxidoreductase subunit B from Legionella pneumophila (strain Corby).